Reading from the N-terminus, the 422-residue chain is D-amino acid dehydrogenase (422 aa).

FAD is bound at residue valine 3–tryptophan 17.

This sequence belongs to the DadA oxidoreductase family. FAD serves as cofactor.

It carries out the reaction a D-alpha-amino acid + A + H2O = a 2-oxocarboxylate + AH2 + NH4(+). Its pathway is amino-acid degradation; D-alanine degradation; NH(3) and pyruvate from D-alanine: step 1/1. Functionally, oxidative deamination of D-amino acids. The protein is D-amino acid dehydrogenase of Paramagnetospirillum magneticum (strain ATCC 700264 / AMB-1) (Magnetospirillum magneticum).